The sequence spans 203 residues: FMN-dependent NADH:quinone oxidoreductase 3 (203 aa).

Residues Ser9, 15 to 17, 95 to 98, and 139 to 142 contribute to the FMN site; these read SAS, MYNF, and TAGG.

Belongs to the azoreductase type 1 family. As to quaternary structure, homodimer. FMN is required as a cofactor.

The enzyme catalyses 2 a quinone + NADH + H(+) = 2 a 1,4-benzosemiquinone + NAD(+). It carries out the reaction N,N-dimethyl-1,4-phenylenediamine + anthranilate + 2 NAD(+) = 2-(4-dimethylaminophenyl)diazenylbenzoate + 2 NADH + 2 H(+). Functionally, quinone reductase that provides resistance to thiol-specific stress caused by electrophilic quinones. Also exhibits azoreductase activity. Catalyzes the reductive cleavage of the azo bond in aromatic azo compounds to the corresponding amines. This Pseudomonas fluorescens (strain Pf0-1) protein is FMN-dependent NADH:quinone oxidoreductase 3.